The primary structure comprises 375 residues: Cobalt-precorrin-5B C(1)-methyltransferase (375 aa).

This sequence belongs to the CbiD family.

The catalysed reaction is Co-precorrin-5B + S-adenosyl-L-methionine = Co-precorrin-6A + S-adenosyl-L-homocysteine. It participates in cofactor biosynthesis; adenosylcobalamin biosynthesis; cob(II)yrinate a,c-diamide from sirohydrochlorin (anaerobic route): step 6/10. In terms of biological role, catalyzes the methylation of C-1 in cobalt-precorrin-5B to form cobalt-precorrin-6A. The polypeptide is Cobalt-precorrin-5B C(1)-methyltransferase (Fusobacterium nucleatum subsp. nucleatum (strain ATCC 25586 / DSM 15643 / BCRC 10681 / CIP 101130 / JCM 8532 / KCTC 2640 / LMG 13131 / VPI 4355)).